Consider the following 717-residue polypeptide: Transport/processing ATP-binding protein ComA (717 aa).

A Peptidase C39 domain is found at 11 to 138 (QVDQMDCGVA…EEWTGVTLFM (128 aa)). Cysteine 17 is an active-site residue. 6 helical membrane-spanning segments follow: residues 166–186 (GLIANIVLATLLVTVINIVGS), 205–225 (LGIISIGLVIVYIFQQILSYA), 237–257 (LSIDVILSYIKHVFHLPMSFF), 282–302 (TILSIFLDVSTVVIISLVLFS), 306–326 (NLFFMTLLALPIYTVIIFAFM), and 397–417 (VAHLLLNVGILWMGAVLVMDG). An ABC transmembrane type-1 domain is found at 168-450 (IANIVLATLL…IINLQTKLQT (283 aa)). One can recognise an ABC transporter domain in the interval 484–717 (MTFKQVHYKY…GGFYAHLVNS (234 aa)). 517-524 (GISGSGKT) contributes to the ATP binding site.

This sequence belongs to the ABC transporter superfamily. Competence factor exporter (TC 3.A.1.112.1) family.

Its subcellular location is the cell membrane. Required for induction of competence. Seems to transport the competence-stimulating peptide (CSP). The chain is Transport/processing ATP-binding protein ComA (comA) from Streptococcus pneumoniae serotype 4 (strain ATCC BAA-334 / TIGR4).